We begin with the raw amino-acid sequence, 36 residues long: GILSLVKVAKLAGKTFAKEGGKFGLEFIACKVTNQC.

C30 and C36 are oxidised to a cystine.

In terms of tissue distribution, expressed by the skin glands.

It localises to the secreted. Functionally, antimicrobial peptide. The polypeptide is Esculentin-2R (Pelophylax ridibundus (Marsh frog)).